The primary structure comprises 773 residues: MIITKSWLNDWLELEEISSDKIAKTLNSIGIEVDRVGALKAPDKVVVGYVKEKIKHENSDKLSICQVDIGSETLQIVCGAANVDAGQFVAVATKGAIMPNGMEIKEAKLRGVDSCGMLCSSLELGFEKINEGIMLLDESIGKLELGRPLNTYEIFNDELIEVELTPNRGDCLSIYGIARDLAAALNLNLKEPKPFKESENVLGIGRILRLAAEKELNGLYNYRAIGLKEEIQTNLLLSLRLAQIEGLGKNSIENLLNYATHSTGVLFNAYDLSSFSEKDEEFIINLSKQVHGETKVSYKDKLLSFSGIFQNNESRCKDDSKIIIIEANYTDPLVIADAKIYHKDQDEKMLYRSFRGSEPKLNLGMDFLLGIFEHIPNLVIYSSSQQILTDKELPIIPISIEGISDIIGQNVDKDEVLKILKKLGFELILSGEGLINVKAPLHRPDIKNLSDICEEVVRIIGIDNIASKGLEFIEKNRLNSAYKNYIEFLNLRKRAVASGYFESLHYVLDNGEELKRLGFDSVKLKLINPITAELNTLRTTLLNHLLNAASLNAKNSKKIIKLFELGAVFNVNNQELNRIAFIHSGLKEEAKISNKAKPESVQFYDFLLDIKNIIGDFKLKSSKYNILSPYEQADIYLSDIKVGFIGRLHLKIENERDLPKTYICELDLDLIRQDFKIAKPYSKFPAITRDLSVLIPKGFEYNQIKNCIEELNLEILENFRLVDIYSDENLKEFYSITISFSFRDINKTLEDNQVNECMDKILNTLKNLGLDLR.

The tRNA-binding domain maps to 39-150 (LKAPDKVVVG…GKLELGRPLN (112 aa)). A B5 domain is found at 391–467 (KELPIIPISI…RIIGIDNIAS (77 aa)). Asp-445, Asp-451, Glu-454, and Glu-455 together coordinate Mg(2+). One can recognise an FDX-ACB domain in the interval 682 to 773 (SKFPAITRDL…TLKNLGLDLR (92 aa)).

The protein belongs to the phenylalanyl-tRNA synthetase beta subunit family. Type 1 subfamily. As to quaternary structure, tetramer of two alpha and two beta subunits. The cofactor is Mg(2+).

It is found in the cytoplasm. The enzyme catalyses tRNA(Phe) + L-phenylalanine + ATP = L-phenylalanyl-tRNA(Phe) + AMP + diphosphate + H(+). This Campylobacter jejuni (strain RM1221) protein is Phenylalanine--tRNA ligase beta subunit.